We begin with the raw amino-acid sequence, 224 residues long: Ribosomal RNA small subunit methyltransferase G (224 aa).

Residues G69, L74, 119-120 (AE), and R137 contribute to the S-adenosyl-L-methionine site.

Belongs to the methyltransferase superfamily. RNA methyltransferase RsmG family.

Its subcellular location is the cytoplasm. In terms of biological role, specifically methylates the N7 position of guanine in position 518 of 16S rRNA. This chain is Ribosomal RNA small subunit methyltransferase G, found in Mycobacterium bovis (strain ATCC BAA-935 / AF2122/97).